Consider the following 307-residue polypeptide: Urease accessory protein UreD (307 aa).

Belongs to the UreD family. As to quaternary structure, ureD, UreF and UreG form a complex that acts as a GTP-hydrolysis-dependent molecular chaperone, activating the urease apoprotein by helping to assemble the nickel containing metallocenter of UreC. The UreE protein probably delivers the nickel.

Its subcellular location is the cytoplasm. Functionally, required for maturation of urease via the functional incorporation of the urease nickel metallocenter. In Prochlorococcus marinus (strain NATL1A), this protein is Urease accessory protein UreD.